We begin with the raw amino-acid sequence, 338 residues long: Transferrin receptor subunit ESAG7 (338 aa).

The first 17 residues, 1 to 17, serve as a signal peptide directing secretion; the sequence is MRFWFVLLALLGKEIYA. N26 and N110 each carry an N-linked (GlcNAc...) asparagine glycan. 4 disulfide bridges follow: C34/C161, C84/C311, C144/C215, and C230/C247. N-linked (GlcNAc...) asparagine glycosylation occurs at N234.

In terms of assembly, heterodimer composed of ESAG6 and ESAG7. Post-translationally, N-glycosylated. Glycosylation is dispensable for heterodimer formation and host transferrin binding.

The protein resides in the cell membrane. It localises to the flagellar pocket. Its function is as follows. Transferrin receptor subunit involved in receptor-mediated acquisition of iron from the environment by binding host TF/transferrin. The protein is Transferrin receptor subunit ESAG7 of Trypanosoma brucei brucei.